A 200-amino-acid chain; its full sequence is Recombination protein RecR (200 aa).

The segment at 57–72 adopts a C4-type zinc-finger fold; it reads CSQCRTFTEQETCAIC. A Toprim domain is found at 81 to 176; sequence GLLCVVEMPA…KVSRIAHGIP (96 aa).

Belongs to the RecR family.

In terms of biological role, may play a role in DNA repair. It seems to be involved in an RecBC-independent recombinational process of DNA repair. It may act with RecF and RecO. The polypeptide is Recombination protein RecR (Actinobacillus succinogenes (strain ATCC 55618 / DSM 22257 / CCUG 43843 / 130Z)).